A 116-amino-acid chain; its full sequence is Large ribosomal subunit protein bL19 (116 aa).

It belongs to the bacterial ribosomal protein bL19 family.

Functionally, this protein is located at the 30S-50S ribosomal subunit interface and may play a role in the structure and function of the aminoacyl-tRNA binding site. In Haemophilus influenzae (strain 86-028NP), this protein is Large ribosomal subunit protein bL19.